A 502-amino-acid polypeptide reads, in one-letter code: Potassium channel KAT3 (502 aa).

The Cytoplasmic segment spans residues 1-67 (MPRSSRMNLW…PYDPRYKVWE (67 aa)). The helical transmembrane segment at 68 to 88 (TFLIILVVYSAWICPLEFAFL) threads the bilayer. Over 89 to 95 (RYLPSAP) the chain is Extracellular. The chain crosses the membrane as a helical span at residues 96–116 (FVVDDVVNGFFAVDIMLTFFV). Residues 117-138 (PFVDKKSYLLVNDPKKIAVRYL) are Cytoplasmic-facing. Residues 139–159 (SSWFVFDVCSTVPFHSISLLF) traverse the membrane as a helical segment. At 160-169 (NEHGHDLGFK) the chain is on the extracellular side. A helical; Voltage-sensor transmembrane segment spans residues 170 to 190 (FLNVLRLWRLRRVSSMFARLE). Topologically, residues 191 to 204 (KDIRFNYAVIRCTK) are cytoplasmic. Residues 205-225 (LISVTLFAIHCAGCINYLIAD) form a helical membrane-spanning segment. Residues 226-252 (RYPDPRRTWIGAVMPNFREDGLWIRYV) are Extracellular-facing. The segment at residues 253 to 272 (TAMYWSITTLTTTGYGDLHA) is an intramembrane region (pore-forming). The Extracellular segment spans residues 273–276 (ENAR). Residues 277–297 (EMLFGICYMLFNLWLTAYLIG) traverse the membrane as a helical segment. Residues 298–502 (NMTNLVVHST…IRSNLQQVNV (205 aa)) lie on the Cytoplasmic side of the membrane. 381–500 (LFKGVSSRFI…DIIRSNLQQV (120 aa)) contributes to the a nucleoside 3',5'-cyclic phosphate binding site.

Belongs to the potassium channel family. Plant (TC 1.A.1.4) subfamily.

Its subcellular location is the membrane. Its function is as follows. Probable inward-rectifying potassium channel. Assuming opened or closed conformations in response to the voltage difference across the membrane, the channel is activated by hyperpolarization. The protein is Potassium channel KAT3 of Oryza sativa subsp. japonica (Rice).